Reading from the N-terminus, the 283-residue chain is Pantothenate synthetase 2 (283 aa).

Residue 34–41 (MGALHDGH) participates in ATP binding. Histidine 41 serves as the catalytic Proton donor. Glutamine 65 lines the (R)-pantoate pocket. Beta-alanine is bound at residue glutamine 65. 152-155 (GEKD) serves as a coordination point for ATP. Residue glutamine 158 participates in (R)-pantoate binding. Residues valine 181 and 189–192 (MSSR) each bind ATP.

The protein belongs to the pantothenate synthetase family. As to quaternary structure, homodimer.

It is found in the cytoplasm. The catalysed reaction is (R)-pantoate + beta-alanine + ATP = (R)-pantothenate + AMP + diphosphate + H(+). Its pathway is cofactor biosynthesis; (R)-pantothenate biosynthesis; (R)-pantothenate from (R)-pantoate and beta-alanine: step 1/1. In terms of biological role, catalyzes the condensation of pantoate with beta-alanine in an ATP-dependent reaction via a pantoyl-adenylate intermediate. In Bradyrhizobium diazoefficiens (strain JCM 10833 / BCRC 13528 / IAM 13628 / NBRC 14792 / USDA 110), this protein is Pantothenate synthetase 2.